Consider the following 153-residue polypeptide: MQNMNEQQEQWQERVIQIRRVAKVVKGGKKLSFRVLVVVGNLNGCVGVGMGKAADVMSAVTKAVVDAKKQLINITLTPTNSIVHASQGRFSAAVVFLKPAASGSGVIAGGAVRSVMELAGIQNVLSKQLGGSNPLNNAKAALLALKSSSANAR.

The 64-residue stretch at 11 to 74 (WQERVIQIRR…VDAKKQLINI (64 aa)) folds into the S5 DRBM domain.

Belongs to the universal ribosomal protein uS5 family. In terms of assembly, part of the 30S ribosomal subunit. Contacts protein S4.

Its subcellular location is the plastid. The protein resides in the chloroplast. In terms of biological role, with S4 and S12 plays an important role in translational accuracy. The protein is Small ribosomal subunit protein uS5c (rps5) of Cyanidioschyzon merolae (strain NIES-3377 / 10D) (Unicellular red alga).